A 279-amino-acid chain; its full sequence is 2-dehydropantoate 2-reductase (279 aa).

Residues 6 to 11 (GLGAVG), lysine 66, and asparagine 86 each bind NADP(+). Residue lysine 158 is the Proton donor of the active site. Residues lysine 158, asparagine 162, asparagine 166, asparagine 176, and 225–228 (NLSS) each bind substrate. NADP(+) is bound at residue glutamate 240.

This sequence belongs to the ketopantoate reductase family.

It is found in the cytoplasm. The enzyme catalyses (R)-pantoate + NAD(+) = 2-dehydropantoate + NADH + H(+). It catalyses the reaction (R)-pantoate + NADP(+) = 2-dehydropantoate + NADPH + H(+). Its pathway is cofactor biosynthesis; coenzyme A biosynthesis. Its function is as follows. Catalyzes the NAD(P)H-dependent reduction of ketopantoate into pantoic acid. The sequence is that of 2-dehydropantoate 2-reductase from Pyrobaculum aerophilum (strain ATCC 51768 / DSM 7523 / JCM 9630 / CIP 104966 / NBRC 100827 / IM2).